A 235-amino-acid chain; its full sequence is Glucosamine-6-phosphate deaminase (235 aa).

Residue Asp-62 is the Proton acceptor; for enolization step of the active site. Asn-128 serves as the catalytic For ring-opening step. His-130 acts as the Proton acceptor; for ring-opening step in catalysis. The For ring-opening step role is filled by Glu-135.

The protein belongs to the glucosamine/galactosamine-6-phosphate isomerase family. NagB subfamily.

It catalyses the reaction alpha-D-glucosamine 6-phosphate + H2O = beta-D-fructose 6-phosphate + NH4(+). The protein operates within amino-sugar metabolism; N-acetylneuraminate degradation; D-fructose 6-phosphate from N-acetylneuraminate: step 5/5. In terms of biological role, catalyzes the reversible isomerization-deamination of glucosamine 6-phosphate (GlcN6P) to form fructose 6-phosphate (Fru6P) and ammonium ion. This is Glucosamine-6-phosphate deaminase from Streptococcus pneumoniae serotype 2 (strain D39 / NCTC 7466).